A 761-amino-acid chain; its full sequence is Nitrogen fixation protein FixI (761 aa).

Residues 1–120 (MSCCTMDAES…SAPESDKTRN (120 aa)) lie on the Cytoplasmic side of the membrane. One can recognise an HMA domain in the interval 36–106 (RQLDLSVSDV…EINSAGYRAH (71 aa)). A metal cation-binding residues include Cys47 and Cys50. Residues 121–142 (QLLLAIGVSGFAAPNIMLLSVS) form a helical membrane-spanning segment. Topologically, residues 143 to 155 (VWSGADAATRDMF) are extracellular. A helical transmembrane segment spans residues 156–177 (HWISAMIAAPALVYAGRFFFKS). At 178-184 (AWNALRH) the chain is on the cytoplasmic side. Residues 185–205 (GRTNMDVPISVTVSLSYAVSL) form a helical membrane-spanning segment. Topologically, residues 206 to 217 (WETVHHGEHAWF) are extracellular. Residues 218–238 (DASVSLLFFLLIGRTLDHIMR) traverse the membrane as a helical segment. The Cytoplasmic portion of the chain corresponds to 239–367 (EKARAAINGL…RARYRRIADR (129 aa)). Residues 368 to 390 (AATLYSPVVHLLALVSFLAWGFL) form a helical membrane-spanning segment. Topologically, residues 391-395 (GGDWK) are extracellular. A helical membrane pass occupies residues 396–415 (QAMLVAVAVLIITCPCALGL). Residues 416 to 691 (AVPVVQVVAA…AVARRSASLI (276 aa)) lie on the Cytoplasmic side of the membrane. The 4-aspartylphosphate intermediate role is filled by Asp453. Residues Asp637 and Asp641 each contribute to the Mg(2+) site. The chain crosses the membrane as a helical span at residues 692–711 (RQNFALAIGYNVLAVPIAIA). Residues 712-716 (GLATP) are Extracellular-facing. The helical transmembrane segment at 717-735 (LIAAVAMSTSSIIVVTNAL) threads the bilayer. Topologically, residues 736 to 761 (RLNGFGKRPDMHIRRGIGRSAEVKAA) are cytoplasmic.

It belongs to the cation transport ATPase (P-type) (TC 3.A.3) family. Type IB subfamily.

The protein resides in the cell membrane. It catalyses the reaction ATP + H2O = ADP + phosphate + H(+). Its function is as follows. FixI is a pump of a specific cation involved in symbiotic nitrogen fixation. The four proteins FixG, FixH, FixI, and FixS may participate in a membrane-bound complex coupling the FixI cation pump with a redox process catalyzed by FixG. This Rhizobium leguminosarum bv. viciae protein is Nitrogen fixation protein FixI (fixI).